We begin with the raw amino-acid sequence, 111 residues long: Phosphoribosyl-ATP pyrophosphatase (111 aa).

It belongs to the PRA-PH family.

Its subcellular location is the cytoplasm. It catalyses the reaction 1-(5-phospho-beta-D-ribosyl)-ATP + H2O = 1-(5-phospho-beta-D-ribosyl)-5'-AMP + diphosphate + H(+). It participates in amino-acid biosynthesis; L-histidine biosynthesis; L-histidine from 5-phospho-alpha-D-ribose 1-diphosphate: step 2/9. The polypeptide is Phosphoribosyl-ATP pyrophosphatase (Azotobacter vinelandii (strain DJ / ATCC BAA-1303)).